The chain runs to 320 residues: MRQTKTGILLANLGTPDAPTPEAVKRYLKQFLSDRRVVDTSRLLWWPLLRGVILPLRSPRVAKLYASVWMEGGSPLMVYSRQQQQALAQRLPEMPVALGMSYGSPSLESAVDELLAEHVDHIVVLPLYPQFSCSTVGAVWDELARILARKRSIPGISFIRDYADNHDYINALANSVRASFAKHGEPDLLLLSYHGIPQRYADEGDDYPQRCRTTTRELASALGMAPEKVMMTFQSRFGREPWLMPYTDETLKMLGEKGVGHIQVMCPGFAADCLETLEEIAEQNREVFLGAGGKKYEYIPALNATPEHIEMMANLVAAYR.

Histidine 194 and glutamate 275 together coordinate Fe cation.

This sequence belongs to the ferrochelatase family. Monomer.

Its subcellular location is the cytoplasm. The enzyme catalyses heme b + 2 H(+) = protoporphyrin IX + Fe(2+). It functions in the pathway porphyrin-containing compound metabolism; protoheme biosynthesis; protoheme from protoporphyrin-IX: step 1/1. In terms of biological role, catalyzes the ferrous insertion into protoporphyrin IX. The chain is Ferrochelatase from Escherichia coli (strain K12 / MC4100 / BW2952).